A 279-amino-acid chain; its full sequence is Large ribosomal subunit protein uL5c (279 aa).

2 disordered regions span residues 1-23 (MAATAVTLPSSPAPFPVTTTASS) and 40-63 (LRVAASAAADAPPKPAPPPTSPSG). A chloroplast-targeting transit peptide spans 1–43 (MAATAVTLPSSPAPFPVTTTASSSRNVRLLLRSPPPRRALRVA). The span at 41-50 (RVAASAAADA) shows a compositional bias: low complexity. The span at 51 to 60 (PPKPAPPPTS) shows a compositional bias: pro residues.

It belongs to the universal ribosomal protein uL5 family. Part of the 50S ribosomal subunit; contacts the 5S rRNA.

It localises to the plastid. Its subcellular location is the chloroplast. Functionally, binds 5S rRNA, forms part of the central protuberance of the 50S subunit. This Oryza sativa subsp. japonica (Rice) protein is Large ribosomal subunit protein uL5c (RPL5).